The chain runs to 317 residues: tRNA dimethylallyltransferase (317 aa).

14–21 provides a ligand contact to ATP; that stretch reads GPTASGKS. 16–21 contributes to the substrate binding site; the sequence is TASGKS. Interaction with substrate tRNA regions lie at residues 39–42 and 163–167; these read DSVL and QRIQR.

It belongs to the IPP transferase family. As to quaternary structure, monomer. The cofactor is Mg(2+).

The enzyme catalyses adenosine(37) in tRNA + dimethylallyl diphosphate = N(6)-dimethylallyladenosine(37) in tRNA + diphosphate. In terms of biological role, catalyzes the transfer of a dimethylallyl group onto the adenine at position 37 in tRNAs that read codons beginning with uridine, leading to the formation of N6-(dimethylallyl)adenosine (i(6)A). In Xylella fastidiosa (strain M12), this protein is tRNA dimethylallyltransferase.